Here is a 464-residue protein sequence, read N- to C-terminus: Glycine receptor subunit alpha-3 (464 aa).

A signal peptide spans 1–33; sequence MAHVRHFRTLLSGFYFWEAALLLSLVATKETNS. At 34–255 the chain is on the extracellular side; sequence ARSRSAPMSP…RFHLERQMGY (222 aa). Asparagine 71 carries an N-linked (GlcNAc...) asparagine glycan. Cysteine 171 and cysteine 185 are oxidised to a cystine. The Zn(2+) site is built by glutamate 225 and aspartate 227. Cysteine 231 and cysteine 242 are joined by a disulfide. 235 to 240 contributes to the strychnine binding site; sequence YNTGKF. Histidine 248 contacts Zn(2+). Residues 256-277 traverse the membrane as a helical segment; it reads YLIQMYIPSLLIVILSWVSFWI. At 278-282 the chain is on the cytoplasmic side; that stretch reads NMDAA. The chain crosses the membrane as a helical span at residues 283–303; the sequence is PARVALGITTVLTMTTQSSGS. Residues 304–314 are Extracellular-facing; that stretch reads RASLPKVSYVK. The chain crosses the membrane as a helical span at residues 315-335; the sequence is AIDIWMAVCLLFVFSALLEYA. Topologically, residues 336–430 are cytoplasmic; the sequence is AVNFVSRQHK…FIDRAKKIDT (95 aa). Position 370 is a phosphoserine (serine 370). The residue at position 379 (serine 379) is a Phosphoserine; by PKA. Residues 431–451 traverse the membrane as a helical segment; sequence ISRACFPLAFLIFNIFYWVIY. The Extracellular segment spans residues 452-464; the sequence is KILRHEDIHHQQD.

Belongs to the ligand-gated ion channel (TC 1.A.9) family. Glycine receptor (TC 1.A.9.3) subfamily. GLRA3 sub-subfamily. In terms of assembly, homopentamer (in vitro). Heteropentamer composed of GLRA3 and GLRB. Both homopentamers and heteropentamers form functional ion channels, but their characteristics are subtly different. Phosphorylated by PKA; this causes down-regulation of channel activity.

It localises to the postsynaptic cell membrane. The protein localises to the perikaryon. The protein resides in the cell projection. Its subcellular location is the dendrite. It is found in the synapse. It localises to the cell membrane. The catalysed reaction is chloride(in) = chloride(out). With respect to regulation, low levels of Zn(2+) ions (1 uM) increase glycine sensitivity and decrease the glycine concentration required for half-maximal channel activity. Channel activity is strongly enhanced by ethanol. Inhibited by picrotoxin. Inhibited by prostaglandin E2, probably via PKA-mediated phosphorylation at Ser-379. In terms of biological role, glycine receptors are ligand-gated chloride channels. Channel opening is triggered by extracellular glycine. Channel characteristics depend on the subunit composition; heteropentameric channels display faster channel closure. Plays an important role in the down-regulation of neuronal excitability. Contributes to the generation of inhibitory postsynaptic currents. Contributes to increased pain perception in response to increased prostaglandin E2 levels. Plays a role in cellular responses to ethanol. In Rattus norvegicus (Rat), this protein is Glycine receptor subunit alpha-3 (Glra3).